Here is a 310-residue protein sequence, read N- to C-terminus: tRNA dimethylallyltransferase (310 aa).

Residue Gly13–Thr20 coordinates ATP. Thr15–Thr20 contributes to the substrate binding site. Interaction with substrate tRNA regions lie at residues Asp38–Leu41, Gln162–Arg166, Arg243–Arg248, and Lys276–Arg283.

It belongs to the IPP transferase family. As to quaternary structure, monomer. Mg(2+) is required as a cofactor.

The catalysed reaction is adenosine(37) in tRNA + dimethylallyl diphosphate = N(6)-dimethylallyladenosine(37) in tRNA + diphosphate. Catalyzes the transfer of a dimethylallyl group onto the adenine at position 37 in tRNAs that read codons beginning with uridine, leading to the formation of N6-(dimethylallyl)adenosine (i(6)A). This is tRNA dimethylallyltransferase from Vibrio parahaemolyticus serotype O3:K6 (strain RIMD 2210633).